The following is a 320-amino-acid chain: Transcription termination/antitermination protein NusG (320 aa).

This sequence belongs to the NusG family.

Its function is as follows. Participates in transcription elongation, termination and antitermination. The polypeptide is Transcription termination/antitermination protein NusG (Mycoplasma pneumoniae (strain ATCC 29342 / M129 / Subtype 1) (Mycoplasmoides pneumoniae)).